Reading from the N-terminus, the 438-residue chain is Gamma-glutamyl phosphate reductase (438 aa).

The protein belongs to the gamma-glutamyl phosphate reductase family.

It is found in the cytoplasm. The enzyme catalyses L-glutamate 5-semialdehyde + phosphate + NADP(+) = L-glutamyl 5-phosphate + NADPH + H(+). Its pathway is amino-acid biosynthesis; L-proline biosynthesis; L-glutamate 5-semialdehyde from L-glutamate: step 2/2. Functionally, catalyzes the NADPH-dependent reduction of L-glutamate 5-phosphate into L-glutamate 5-semialdehyde and phosphate. The product spontaneously undergoes cyclization to form 1-pyrroline-5-carboxylate. The sequence is that of Gamma-glutamyl phosphate reductase from Natronomonas pharaonis (strain ATCC 35678 / DSM 2160 / CIP 103997 / JCM 8858 / NBRC 14720 / NCIMB 2260 / Gabara) (Halobacterium pharaonis).